Reading from the N-terminus, the 366-residue chain is Phospho-N-acetylmuramoyl-pentapeptide-transferase (366 aa).

10 helical membrane-spanning segments follow: residues A25–N45, G70–W90, L93–F113, L134–A154, F174–G194, G205–A225, L245–P265, A268–V288, V297–F317, and Q343–L363.

This sequence belongs to the glycosyltransferase 4 family. MraY subfamily. Requires Mg(2+) as cofactor.

Its subcellular location is the cell inner membrane. It carries out the reaction UDP-N-acetyl-alpha-D-muramoyl-L-alanyl-gamma-D-glutamyl-meso-2,6-diaminopimeloyl-D-alanyl-D-alanine + di-trans,octa-cis-undecaprenyl phosphate = di-trans,octa-cis-undecaprenyl diphospho-N-acetyl-alpha-D-muramoyl-L-alanyl-D-glutamyl-meso-2,6-diaminopimeloyl-D-alanyl-D-alanine + UMP. The protein operates within cell wall biogenesis; peptidoglycan biosynthesis. In terms of biological role, catalyzes the initial step of the lipid cycle reactions in the biosynthesis of the cell wall peptidoglycan: transfers peptidoglycan precursor phospho-MurNAc-pentapeptide from UDP-MurNAc-pentapeptide onto the lipid carrier undecaprenyl phosphate, yielding undecaprenyl-pyrophosphoryl-MurNAc-pentapeptide, known as lipid I. This Agrobacterium fabrum (strain C58 / ATCC 33970) (Agrobacterium tumefaciens (strain C58)) protein is Phospho-N-acetylmuramoyl-pentapeptide-transferase.